The following is a 129-amino-acid chain: Snaclec coagulation factor IX-binding protein subunit A (129 aa).

Residues 1–129 (DCPSGWSSYE…GQQNPFVCEA (129 aa)) form the C-type lectin domain. 3 cysteine pairs are disulfide-bonded: C2–C13, C30–C127, and C102–C119. Ca(2+) is bound by residues S41, E43, and E47. E128 contributes to the Ca(2+) binding site.

This sequence belongs to the snaclec family. Heterodimer of subunits A and B; disulfide-linked. Expressed by the venom gland.

Its subcellular location is the secreted. Its function is as follows. Anticoagulant protein which binds to the gamma-carboxyglutamic acid-domain regions of factor IX (F9) (but not factor X) in the presence of calcium with a 1 to 1 stoichiometry. In Protobothrops flavoviridis (Habu), this protein is Snaclec coagulation factor IX-binding protein subunit A.